The sequence spans 203 residues: GTP-binding protein YPTC1 (203 aa).

Residues 15–23 (GDSGVGKSC), 33–40 (YTESYIST), 63–67 (DTAGQ), 121–124 (NKSD), and 151–153 (SAK) contribute to the GTP site. Residues 37–45 (YISTIGVDF) carry the Effector region motif. The disordered stretch occupies residues 174–203 (ASQPIPTKAGGPVVRPQEGKPINSKSSSCC). S-geranylgeranyl cysteine attachment occurs at residues cysteine 202 and cysteine 203.

Belongs to the small GTPase superfamily. Rab family.

The protein localises to the cell membrane. Functionally, protein transport. Probably involved in vesicular traffic. This chain is GTP-binding protein YPTC1 (YPTC1), found in Chlamydomonas reinhardtii (Chlamydomonas smithii).